The sequence spans 161 residues: 2-C-methyl-D-erythritol 2,4-cyclodiphosphate synthase (161 aa).

A divalent metal cation contacts are provided by Asp10 and His12. 4-CDP-2-C-methyl-D-erythritol 2-phosphate contacts are provided by residues 10–12 (DVH) and 36–37 (HS). His44 contributes to the a divalent metal cation binding site. 4-CDP-2-C-methyl-D-erythritol 2-phosphate contacts are provided by residues 58–60 (DIG), 63–67 (FPDTD), 102–108 (AQAPKML), 134–137 (TTTE), Phe141, and Arg144.

Belongs to the IspF family. Homotrimer. Requires a divalent metal cation as cofactor.

It catalyses the reaction 4-CDP-2-C-methyl-D-erythritol 2-phosphate = 2-C-methyl-D-erythritol 2,4-cyclic diphosphate + CMP. It participates in isoprenoid biosynthesis; isopentenyl diphosphate biosynthesis via DXP pathway; isopentenyl diphosphate from 1-deoxy-D-xylulose 5-phosphate: step 4/6. Involved in the biosynthesis of isopentenyl diphosphate (IPP) and dimethylallyl diphosphate (DMAPP), two major building blocks of isoprenoid compounds. Catalyzes the conversion of 4-diphosphocytidyl-2-C-methyl-D-erythritol 2-phosphate (CDP-ME2P) to 2-C-methyl-D-erythritol 2,4-cyclodiphosphate (ME-CPP) with a corresponding release of cytidine 5-monophosphate (CMP). The polypeptide is 2-C-methyl-D-erythritol 2,4-cyclodiphosphate synthase (Shewanella loihica (strain ATCC BAA-1088 / PV-4)).